The chain runs to 690 residues: Beta-galactosidase (690 aa).

N173 lines the substrate pocket. The active-site Proton donor is E174. A substrate-binding site is contributed by W345.

This sequence belongs to the glycosyl hydrolase 42 family.

The enzyme catalyses Hydrolysis of terminal non-reducing beta-D-galactose residues in beta-D-galactosides.. With respect to regulation, activity stimulated by beta-mercaptoethanol. Its function is as follows. Highly specific towards beta-D-galactoside substrates. Hydrolyzes 5-bromo-4-chloro-3-indolyl-beta-D-galactopyranoside (X-Gal) and o-nitrophenyl-beta-D-galactopyranoside (ONPG). Has activity against p-nitrophenyl(pNP)-beta-D-galactoside, but not significantly at all towards pNP-alpha-D-galactoside, pNP-beta-D-glucoside, pNP-beta-D-mannoside, pNP-beta-L-fucoside, pNP-beta-D-xyloside, pNP-beta-L-arabinoside, pNP-beta-D-galuronide, pNP-beta-D-glucuronide, pNP-beta-D-lactoside or pNP-beta-D-cellobioside. The protein is Beta-galactosidase of Arthrobacter sp.